An 864-amino-acid chain; its full sequence is E3 ubiquitin-protein ligase Itchy (864 aa).

In terms of domain architecture, C2 spans M1–E115. S2 carries the post-translational modification N-acetylserine. Residues N151 to D164 are compositionally biased toward polar residues. Positions N151 to E294 are disordered. The span at D165–R174 shows a compositional bias: basic and acidic residues. Low complexity predominate over residues N195–G206. S199 carries the phosphoserine; by MAPK8 modification. The span at S210 to R224 shows a compositional bias: pro residues. T222 bears the Phosphothreonine; by MAPK8 mark. Low complexity predominate over residues N230–S259. S232 is modified (phosphoserine; by MAPK8). WW domains lie at A287–P320 and E319–L352. T346 is subject to Phosphothreonine; by SGK3. The required for interaction with FYN stretch occupies residues R356 to S432. Residue Y381 is modified to Phosphotyrosine; by FYN. WW domains follow at residues G399–S432 and K439–T472. A Phosphoserine; by SGK3 modification is found at S411. The HECT domain occupies S530–E864. Residues R535–G544 are MAP kinase docking site. Catalysis depends on C832, which acts as the Glycyl thioester intermediate.

In terms of assembly, monomer. Part of a ternary complex composed of SMAD3, ITCH/AIP4 and NEDD9/HEF1; within the complex NEDD9/HEF1 interacts (via N-terminus) with ITCH/AIP4 (via WW domains); the complex mediates ubiquitination and proteasomal degradation of NEDD9/HEF1. Interacts (via WW domains) with OCNL. Interacts (via WW domains) with NOTCH1. Interacts (via WW domains) JUN. Interacts with JUNB; the interaction promotes ITCH-mediated ubiquitination and degradation of JUNB. Interacts with FYN; the interaction phosphorylates ITCH on Tyr-381 decreasing binding of JUNB. Interacts (via WW domain 2) with N4BP1; the interaction inhibits the E3 ubiquitin-protein ligase activity. Interacts with NDFIP1 and NDFIP2; the interaction with NDFIP proteins activates the E3 ubiquitin-protein ligase and may induce its recruitment to exosomes. Interacts with ARHGEF7. Interacts with RNF11. Interacts (via the WW 1 domain) with NFE2 (via the PXY motif 1); the interaction promotes 'Lys-63'-linked ubiquitination of NFE2, retains it in the cytoplasm and prevents its transactivation activity. Interacts (via WW domains) with CXCR4 (via C-terminus); the interaction depends on CXCR4 phosphorylation. Found in a complex with E3 ligase DTX3L and ESCRT-0 components HGS and STAM. Interacts with DTX3L (via C-terminus); the interaction is increased upon CXCL12 stimulation and inhibits ITCH catalytic activity (the interaction is direct). Interacts with HGS. Interacts (via WW domains) with PCBP2 within a complex containing ITCH, MAVS and PCBP2. Interacts (via WW domains) with TXNIP (via C-terminus). Interacts with p15 BID. Interacts with ERBB4. Interacts with DTX1. Interacts with SPART. Interacts with SNX9 and SNX18. Interacts (via its WW domains) with ATN1. Interacts (via WW domains) with SGK3. Interacts with CBLC. Interacts with OTUD7B. Interacts (via WW domain 1,2 and 3) with PI4K2A; the interaction inhibits PI4K2A catalytic activity and promotes ITCH catalytic activity. Interacts with ARRDC4. Part of a complex containing ITCH, NDFIP1 and MAP3K7. Interacts with UBE2L3; the interaction is mediated by NDFIP1. Interacts with MAPK8/JNK1. Interacts (via WW domains) with ARRDC1 (via PPxY motifs); the interaction is direct and participates in the recruitment of the ubiquitin-protein ligase ITCH to the NOTCH1 receptor. Interacts (via WW domains) with ARRDC2. Interacts (via WW domains) with ARRDC3. Interacts directly with LDLRAD3; this interaction promotes ITCH auto-ubiquitination leading to its degradation. Interacts with ENTREP1; enhances the ubiquitination of CXCR4 by ITCH and its subsequent endocytosis. Interacts with USP12 and WDR48/UAF1; the interaction is more efficient when both USP12 and WDR48/UAF1 are involved and may facilitate the recruitment of the USP12 deubiquitinase complex to Notch. (Microbial infection) Interacts with Epstein-Barr virus LMP2A. On T-cell activation, phosphorylation by the JNK cascade on serine and threonine residues surrounding the PRR domain accelerates the ubiquitination and degradation of JUN and JUNB. The increased ITCH catalytic activity due to phosphorylation by JNK1 may occur due to a conformational change disrupting the interaction between the PRR/WW motifs domain and the HECT domain and, thus exposing the HECT domain. Phosphorylation by FYN reduces interaction with JUNB and negatively controls JUN ubiquitination and degradation. Interacts directly with LDLRAD3; this interaction promotes ITCH auto-ubiquitination leading to its degradation. In terms of processing, monoubiquitinated. Autopolyubiquitinated with 'Lys-63' linkages which does not lead to protein degradation. Detected in uterus (at protein level). Widely expressed.

Its subcellular location is the cell membrane. It is found in the cytoplasm. It localises to the nucleus. The protein localises to the early endosome membrane. The protein resides in the endosome membrane. The catalysed reaction is S-ubiquitinyl-[E2 ubiquitin-conjugating enzyme]-L-cysteine + [acceptor protein]-L-lysine = [E2 ubiquitin-conjugating enzyme]-L-cysteine + N(6)-ubiquitinyl-[acceptor protein]-L-lysine.. Its pathway is protein modification; protein ubiquitination. With respect to regulation, activated by NDFIP1- and NDFIP2-binding. Activated by PI4K2A-binding. Inhibited by DTX3L-binding. Inhibited by N4BP1 binding. Functionally, acts as an E3 ubiquitin-protein ligase which accepts ubiquitin from an E2 ubiquitin-conjugating enzyme in the form of a thioester and then directly transfers the ubiquitin to targeted substrates. It catalyzes 'Lys-29'-, 'Lys-48'- and 'Lys-63'-linked ubiquitin conjugation. Involved in the control of inflammatory signaling pathways. Is an essential component of a ubiquitin-editing protein complex, comprising also TNFAIP3, TAX1BP1 and RNF11, that ensures the transient nature of inflammatory signaling pathways. Promotes the association of the complex after TNF stimulation. Once the complex is formed, TNFAIP3 deubiquitinates 'Lys-63' polyubiquitin chains on RIPK1 and catalyzes the formation of 'Lys-48'-polyubiquitin chains. This leads to RIPK1 proteasomal degradation and consequently termination of the TNF- or LPS-mediated activation of NFKB1. Ubiquitinates RIPK2 by 'Lys-63'-linked conjugation and influences NOD2-dependent signal transduction pathways. Regulates the transcriptional activity of several transcription factors involved in immune response. Ubiquitinates NFE2 by 'Lys-63' linkages and is implicated in the control of the development of hematopoietic lineages. Mediates JUN ubiquitination and degradation. Mediates JUNB ubiquitination and degradation. Critical regulator of type 2 helper T (Th2) cell cytokine production by inducing JUNB ubiquitination and degradation. Involved in the negative regulation of MAVS-dependent cellular antiviral responses. Ubiquitinates MAVS through 'Lys-48'-linked conjugation resulting in MAVS proteasomal degradation. Following ligand stimulation, regulates sorting of Wnt receptor FZD4 to the degradative endocytic pathway probably by modulating PI42KA activity. Ubiquitinates PI4K2A and negatively regulates its catalytic activity. Ubiquitinates chemokine receptor CXCR4 and regulates sorting of CXCR4 to the degradative endocytic pathway following ligand stimulation by ubiquitinating endosomal sorting complex required for transport ESCRT-0 components HGS and STAM. Targets DTX1 for lysosomal degradation and controls NOTCH1 degradation, in the absence of ligand, through 'Lys-29'-linked polyubiquitination. Ubiquitinates SNX9. Ubiquitinates MAP3K7 through 'Lys-48'-linked conjugation. Together with UBR5, involved in the regulation of apoptosis and reactive oxygen species levels through the ubiquitination and proteasomal degradation of TXNIP: catalyzes 'Lys-48'-/'Lys-63'-branched ubiquitination of TXNIP. ITCH synthesizes 'Lys-63'-linked chains, while UBR5 is branching multiple 'Lys-48'-linked chains of substrate initially modified. Mediates the antiapoptotic activity of epidermal growth factor through the ubiquitination and proteasomal degradation of p15 BID. Ubiquitinates BRAT1 and this ubiquitination is enhanced in the presence of NDFIP1. Ubiquitinates NEDD9/HEF1, resulting in proteasomal degradation of NEDD9/HEF1. The protein is E3 ubiquitin-protein ligase Itchy (Itch) of Mus musculus (Mouse).